A 351-amino-acid chain; its full sequence is UDP-N-acetylenolpyruvoylglucosamine reductase (351 aa).

In terms of domain architecture, FAD-binding PCMH-type spans 11–213; that stretch reads GVGGSIACFI…KQVRDQVLRI (203 aa). Residue Arg-158 is part of the active site. Residue Ser-239 is the Proton donor of the active site. Residue Glu-343 is part of the active site.

This sequence belongs to the MurB family. Requires FAD as cofactor.

It is found in the cytoplasm. It catalyses the reaction UDP-N-acetyl-alpha-D-muramate + NADP(+) = UDP-N-acetyl-3-O-(1-carboxyvinyl)-alpha-D-glucosamine + NADPH + H(+). Its pathway is cell wall biogenesis; peptidoglycan biosynthesis. In terms of biological role, cell wall formation. This is UDP-N-acetylenolpyruvoylglucosamine reductase from Tropheryma whipplei (strain Twist) (Whipple's bacillus).